A 101-amino-acid polypeptide reads, in one-letter code: Small ribosomal subunit protein uS14 (101 aa).

Belongs to the universal ribosomal protein uS14 family. As to quaternary structure, part of the 30S ribosomal subunit. Contacts proteins S3 and S10.

Binds 16S rRNA, required for the assembly of 30S particles and may also be responsible for determining the conformation of the 16S rRNA at the A site. The chain is Small ribosomal subunit protein uS14 from Shewanella denitrificans (strain OS217 / ATCC BAA-1090 / DSM 15013).